Reading from the N-terminus, the 552-residue chain is ATP synthase subunit alpha, mitochondrial (552 aa).

Residues 1-47 (MSIFSARLASSVARNLPKAANQVACKAAYPAASLAARKLHVASTQRS) constitute a mitochondrion transit peptide. An ATP-binding site is contributed by 211-218 (GDRQTGKT).

It belongs to the ATPase alpha/beta chains family. In terms of assembly, F-type ATPases have 2 components, CF(1) - the catalytic core - and CF(0) - the membrane proton channel. CF(1) has five subunits: alpha(3), beta(3), gamma(1), delta(1), epsilon(1). CF(0) has three main subunits: a, b and c.

The protein resides in the mitochondrion inner membrane. Functionally, mitochondrial membrane ATP synthase (F(1)F(0) ATP synthase or Complex V) produces ATP from ADP in the presence of a proton gradient across the membrane which is generated by electron transport complexes of the respiratory chain. F-type ATPases consist of two structural domains, F(1) - containing the extramembraneous catalytic core, and F(0) - containing the membrane proton channel, linked together by a central stalk and a peripheral stalk. During catalysis, ATP synthesis in the catalytic domain of F(1) is coupled via a rotary mechanism of the central stalk subunits to proton translocation. Subunits alpha and beta form the catalytic core in F(1). Rotation of the central stalk against the surrounding alpha(3)beta(3) subunits leads to hydrolysis of ATP in three separate catalytic sites on the beta subunits. Subunit alpha does not bear the catalytic high-affinity ATP-binding sites. The polypeptide is ATP synthase subunit alpha, mitochondrial (blw) (Drosophila melanogaster (Fruit fly)).